The primary structure comprises 757 residues: Centrosomal protein of 68 kDa (757 aa).

Composition is skewed to basic and acidic residues over residues 1-17 (MALGEEKAEAEASEDTK) and 86-96 (ANREPVAERSE). Disordered stretches follow at residues 1–47 (MALG…RLEA), 67–158 (WIGT…PSLA), 192–259 (QPSS…GGDA), 311–480 (PGPQ…ESDD), 509–551 (PTGD…SGDP), and 597–618 (LDRWPFSDPDVEGQLPRKGGEQ). Residues 125-144 (LSSSEEFPQTLSLPRTTTIC) are compositionally biased toward polar residues. Low complexity-rich tracts occupy residues 192–206 (QPSSCSISASSTGSS) and 224–240 (VSSSLEPVVPQEPSSVV). Ser332 is subject to Phosphoserine; by PLK1. A compositionally biased stretch (polar residues) spans 339-355 (FSVSPASTLKSPTNVSP). Composition is skewed to basic and acidic residues over residues 405–432 (GSRDARWERREPALRGAKDRLTIGKHLD) and 439–456 (RTRDRGWPSPRPEREKRT). The span at 457–467 (SQSARRPTCTE) shows a compositional bias: polar residues. Phosphoserine occurs at positions 472 and 478. Residues 524 to 543 (SDGPASFPSSSSQSQLPPGA) are compositionally biased toward low complexity.

Interacts with CNTLN; the interaction recruits CEP68 to the centrosome. Interacts with the SCF(FBXW11) complex which contains SKP1, CUL1 and FBXW11; the interaction is probably mediated by FBXW11 and the complex also contains CDK5RAP2 and PCNT. Also interacts with F-box protein BTRC. Interacts with serine/threonine-protein kinase PLK1; the interaction leads to phosphorylation of CEP68 and its subsequent degradation. Interacts with NEK2; the interaction leads to phosphorylation of CEP68. Post-translationally, phosphorylation by PLK1 is required for binding to BTRC in prometaphase. Phosphorylated directly or indirectly by NEK2. NEK2-mediated phosphorylation promotes CEP68 dissociation from the centrosome and its degradation at the onset of mitosis. Ubiquitinated and targeted for proteasomal degradation in early mitosis by the SCF(BTRC) and/or SCF(FBXW11) E3 ubiquitin-protein ligase complexes. Degradation is complete by prometaphase and is required for removal of CDK5RAP2 from the peripheral pericentriolar material and subsequent centriole separation.

Its subcellular location is the cytoplasm. It localises to the cytoskeleton. The protein localises to the microtubule organizing center. The protein resides in the centrosome. Involved in maintenance of centrosome cohesion, probably as part of a linker structure which prevents centrosome splitting. Required for localization of CDK5RAP2 to the centrosome during interphase. Contributes to CROCC/rootletin filament formation. The protein is Centrosomal protein of 68 kDa (CEP68) of Homo sapiens (Human).